A 1099-amino-acid polypeptide reads, in one-letter code: Carbamoyl phosphate synthase large chain (1099 aa).

Residues 1-402 (MPRREDIKRI…ALGKALRSLE (402 aa)) are carboxyphosphate synthetic domain. Positions 129, 169, 175, 176, 208, 210, 215, 241, 242, 243, 285, and 299 each coordinate ATP. The region spanning 133 to 328 (KKTMEEAGLE…IAKIAALLAV (196 aa)) is the ATP-grasp 1 domain. Residues Gln-285, Glu-299, and Asn-301 each coordinate Mg(2+). 3 residues coordinate Mn(2+): Gln-285, Glu-299, and Asn-301. The tract at residues 403-541 (LDAAPKLDLD…STYNGVENEA (139 aa)) is oligomerization domain. The tract at residues 542–944 (IPTDKEKIMI…AFAKAEIAAG (403 aa)) is carbamoyl phosphate synthetic domain. The ATP-grasp 2 domain occupies 666–857 (AKLLKRIGLR…VAKIAAKIMV (192 aa)). Residues Arg-702, Lys-741, Leu-743, Glu-748, Gly-773, Val-774, His-775, Ser-776, Gln-816, and Glu-828 each contribute to the ATP site. Residues Gln-816, Glu-828, and Asn-830 each contribute to the Mg(2+) site. Positions 816, 828, and 830 each coordinate Mn(2+). The region spanning 945-1099 (NPLPTEGAIL…VRKLTDTWKM (155 aa)) is the MGS-like domain. The interval 945-1099 (NPLPTEGAIL…VRKLTDTWKM (155 aa)) is allosteric domain.

This sequence belongs to the CarB family. Composed of two chains; the small (or glutamine) chain promotes the hydrolysis of glutamine to ammonia, which is used by the large (or ammonia) chain to synthesize carbamoyl phosphate. Tetramer of heterodimers (alpha,beta)4. The cofactor is Mg(2+). It depends on Mn(2+) as a cofactor.

The catalysed reaction is hydrogencarbonate + L-glutamine + 2 ATP + H2O = carbamoyl phosphate + L-glutamate + 2 ADP + phosphate + 2 H(+). The enzyme catalyses hydrogencarbonate + NH4(+) + 2 ATP = carbamoyl phosphate + 2 ADP + phosphate + 2 H(+). Its pathway is amino-acid biosynthesis; L-arginine biosynthesis; carbamoyl phosphate from bicarbonate: step 1/1. It participates in pyrimidine metabolism; UMP biosynthesis via de novo pathway; (S)-dihydroorotate from bicarbonate: step 1/3. Its function is as follows. Large subunit of the glutamine-dependent carbamoyl phosphate synthetase (CPSase). CPSase catalyzes the formation of carbamoyl phosphate from the ammonia moiety of glutamine, carbonate, and phosphate donated by ATP, constituting the first step of 2 biosynthetic pathways, one leading to arginine and/or urea and the other to pyrimidine nucleotides. The large subunit (synthetase) binds the substrates ammonia (free or transferred from glutamine from the small subunit), hydrogencarbonate and ATP and carries out an ATP-coupled ligase reaction, activating hydrogencarbonate by forming carboxy phosphate which reacts with ammonia to form carbamoyl phosphate. The chain is Carbamoyl phosphate synthase large chain from Thermotoga neapolitana (strain ATCC 49049 / DSM 4359 / NBRC 107923 / NS-E).